A 115-amino-acid chain; its full sequence is Protein VCF2 (115 aa).

Basic residues predominate over residues Met1 to Asn12. A disordered region spans residues Met1–Val70. A compositionally biased stretch (polar residues) spans Phe33–Ser44.

The protein belongs to the VCF family.

The polypeptide is Protein VCF2 (Homo sapiens (Human)).